The following is a 355-amino-acid chain: MTSSSSNRQFLHRTANTFLTYPQCPEHPEIISQRIWDLVGRWNPLYIICAQEAHEDGNMHLHALIQTDKQVRTTDSRFFDIDGFHPNIQSAMSPNKVRDYILKEPLALFERGTFVPRKKTFLGNSSKGNSEKKPSKDEIMQDIISHATSKPEYLSMVRKSFPYDWATKLQYFEYSANKLFPDIQEEFINPHPTSEPDLLCNESIKDWLQPNIYQQADNGSRKQSLYIVGPTRTGKSTWARSLGRHNYWQNNVDWSSYNEDAIYNIVDDIPFKYCPCWKQLVGCQKEFVVNPKYGKKKKVQMKSKPTIILANSDEDWMKEMTPGQLEYFEANCMIYIMSPGEKWYSPPQLPPTEEV.

The CRESS-DNA virus Rep endonuclease domain occupies 11–114 (LHRTANTFLT…PLALFERGTF (104 aa)). Residues 18–21 (FLTY) carry the RCR-1 motif. A divalent metal cation contacts are provided by Glu-52, His-60, and His-62. An RCR-2 motif is present at residues 60–62 (HLH). Tyr-100 functions as the For DNA cleavage activity in the catalytic mechanism. The RCR-3 motif lies at 100–103 (YILK). An a divalent metal cation-binding site is contributed by Glu-104. An oligomerization region spans residues 175-187 (SANKLFPDIQEEF). 229-236 (GPTRTGKS) is an ATP binding site. A transactivation region spans residues 252 to 270 (VDWSSYNEDAIYNIVDDIP). The short motif at 292-303 (KYGKKKKVQMKS) is the Nuclear localization signal element.

The protein belongs to the geminiviridae Rep protein family. Homooligomer. Rep binds to repeated DNA motifs (iterons). Forms the O-complex, which is a Rep-DNA complex involved in the initiation of RCR. Part of the C- and V-complexes which are RepA-Rep-DNA complexes involved in the c-sense and v-sense transcription. The cofactor is Mg(2+). Mn(2+) is required as a cofactor.

Its subcellular location is the host nucleus. Its function is as follows. Essential for the replication of viral ssDNA. The closed circular ssDNA genome is first converted to a superhelical dsDNA. Rep binds a specific region at the genome origin of replication. It introduces an endonucleolytic nick within the conserved sequence 5'-TAATATTAC-3' in the intergenic region of the genome present in all geminiviruses, thereby initiating the rolling circle replication (RCR). Following cleavage, binds covalently to the 5'-phosphate of DNA as a tyrosyl ester. The cleavage gives rise to a free 3'-OH that serves as a primer for the cellular DNA polymerase. The polymerase synthesizes the (+) strand DNA by rolling circle mechanism. After one round of replication, a Rep-catalyzed nucleotidyl transfer reaction releases a circular single-stranded virus genome, thereby terminating the replication. Displays origin-specific DNA cleavage, nucleotidyl transferase, ATPase and helicase activities. Acts as an inhibitor of C-sense gene transcription. This chain is Replication-associated protein, found in Maize streak virus genotype D (isolate Raw) (MSV).